The following is a 284-amino-acid chain: Riboflavin transporter (284 aa).

2 consecutive EamA domains span residues 2-129 (VAAC…LIII) and 141-273 (LLPI…SLYL). 8 helical membrane-spanning segments follow: residues 26–46 (SVII…PLLV), 58–78 (FGLH…WIYA), 82–102 (VPIW…ILCA), 115–135 (LLTT…WSDS), 136–156 (YTVY…YSVM), 167–187 (ASIS…LWLA), 195–215 (ITAP…FTAL), and 247–267 (GWIV…ALII).

Belongs to the drug/metabolite transporter (DMT) superfamily. 10 TMS drug/metabolite exporter (DME) (TC 2.A.7.3) family.

The protein resides in the cell membrane. Functionally, transports riboflavin into the cell. The chain is Riboflavin transporter from Brucella anthropi (strain ATCC 49188 / DSM 6882 / CCUG 24695 / JCM 21032 / LMG 3331 / NBRC 15819 / NCTC 12168 / Alc 37) (Ochrobactrum anthropi).